The following is a 714-amino-acid chain: Testis-expressed protein 13D (714 aa).

Disordered regions lie at residues 300–419 (GSFP…GCSD) and 431–675 (RRCK…PASF). Composition is skewed to basic and acidic residues over residues 307–320 (SRSH…ERSQ) and 366–378 (GNRE…EGPK). A compositionally biased stretch (basic residues) spans 379–392 (RARRMHTLVFRRSH). Residues 403–416 (TVPQGDSRSYSQEG) are compositionally biased toward polar residues. Basic and acidic residues-rich tracts occupy residues 495 to 505 (CKPEEGPERPQ), 557 to 567 (CKPEEGPERPQ), and 636 to 646 (SRSHGVRESPK). The RanBP2-type zinc finger occupies 677 to 706 (VPVNWKCPWCKAINFSWRTACYKCKKACVP).

This sequence belongs to the TEX13 family.

The sequence is that of Testis-expressed protein 13D from Homo sapiens (Human).